An 87-amino-acid polypeptide reads, in one-letter code: Small ribosomal subunit protein bS20 (87 aa).

The protein belongs to the bacterial ribosomal protein bS20 family.

Binds directly to 16S ribosomal RNA. This Clostridium botulinum (strain Eklund 17B / Type B) protein is Small ribosomal subunit protein bS20.